Reading from the N-terminus, the 221-residue chain is 7-cyano-7-deazaguanine synthase (221 aa).

12–22 contacts ATP; that stretch reads FSGGQDSTTCL. Zn(2+) is bound by residues Cys190, Cys199, Cys202, and Cys205.

Belongs to the QueC family. Homodimer. Zn(2+) is required as a cofactor.

It carries out the reaction 7-carboxy-7-deazaguanine + NH4(+) + ATP = 7-cyano-7-deazaguanine + ADP + phosphate + H2O + H(+). The protein operates within purine metabolism; 7-cyano-7-deazaguanine biosynthesis. Catalyzes the ATP-dependent conversion of 7-carboxy-7-deazaguanine (CDG) to 7-cyano-7-deazaguanine (preQ(0)). The chain is 7-cyano-7-deazaguanine synthase from Clostridium novyi (strain NT).